We begin with the raw amino-acid sequence, 226 residues long: UPF0758 protein SGO_1229 (226 aa).

Residues 103–225 (RILSSQKLAK…YYSYREETDL (123 aa)) form the MPN domain. Zn(2+)-binding residues include histidine 174, histidine 176, and aspartate 187. The JAMM motif motif lies at 174 to 187 (HNHPSGATRPSRDD).

It belongs to the UPF0758 family.

The polypeptide is UPF0758 protein SGO_1229 (Streptococcus gordonii (strain Challis / ATCC 35105 / BCRC 15272 / CH1 / DL1 / V288)).